The following is a 365-amino-acid chain: Protein RecA (365 aa).

77 to 84 (GPESSGKT) contributes to the ATP binding site.

Belongs to the RecA family.

It localises to the cytoplasm. Its function is as follows. Can catalyze the hydrolysis of ATP in the presence of single-stranded DNA, the ATP-dependent uptake of single-stranded DNA by duplex DNA, and the ATP-dependent hybridization of homologous single-stranded DNAs. It interacts with LexA causing its activation and leading to its autocatalytic cleavage. The chain is Protein RecA from Mesorhizobium japonicum (strain LMG 29417 / CECT 9101 / MAFF 303099) (Mesorhizobium loti (strain MAFF 303099)).